Consider the following 429-residue polypeptide: Cytochrome c biogenesis protein CcsB (429 aa).

Helical transmembrane passes span 14–34 (LKVA…GTAL), 72–92 (SFWF…CSWK), and 162–182 (VGPP…TYGV).

Belongs to the Ccs1/CcsB family. In terms of assembly, may interact with CcsA.

It is found in the cellular thylakoid membrane. Functionally, required during biogenesis of c-type cytochromes (cytochrome c6 and cytochrome f) at the step of heme attachment. The sequence is that of Cytochrome c biogenesis protein CcsB from Prochlorococcus marinus (strain SARG / CCMP1375 / SS120).